The primary structure comprises 318 residues: Ribose-phosphate pyrophosphokinase 2 (318 aa).

Position 96–101 (96–101 (RQDKKD)) interacts with ATP. The Mg(2+) site is built by aspartate 128, histidine 130, aspartate 139, and aspartate 143. ATP is bound at residue histidine 130. The tract at residues 212 to 227 (KDRVAILVDDMADTCG) is binding of phosphoribosylpyrophosphate.

This sequence belongs to the ribose-phosphate pyrophosphokinase family. In terms of assembly, homodimer. The active form is probably a hexamer composed of 3 homodimers. Mg(2+) serves as cofactor.

It catalyses the reaction D-ribose 5-phosphate + ATP = 5-phospho-alpha-D-ribose 1-diphosphate + AMP + H(+). The protein operates within metabolic intermediate biosynthesis; 5-phospho-alpha-D-ribose 1-diphosphate biosynthesis; 5-phospho-alpha-D-ribose 1-diphosphate from D-ribose 5-phosphate (route I): step 1/1. With respect to regulation, activated by magnesium and inorganic phosphate. Its function is as follows. Catalyzes the synthesis of phosphoribosylpyrophosphate (PRPP) that is essential for nucleotide synthesis. This Rattus norvegicus (Rat) protein is Ribose-phosphate pyrophosphokinase 2 (Prps2).